Reading from the N-terminus, the 475-residue chain is L-ornithine N(5)-monooxygenase (475 aa).

FAD contacts are provided by residues 65–73 and glutamine 84; that span reads ERQPEFGWH. Lysine 89 provides a ligand contact to substrate. Valine 150 contacts FAD. NADP(+) is bound at residue 238-241; the sequence is GGQS. Residues 277-280 and asparagine 307 each bind substrate; that span reads NEIF. 307–309 serves as a coordination point for NADP(+); it reads NYG. Residue 446 to 448 participates in FAD binding; that stretch reads SLL. Position 449 (serine 449) interacts with substrate.

This sequence belongs to the lysine N(6)-hydroxylase/L-ornithine N(5)-oxygenase family. As to quaternary structure, homotetramer. It depends on FAD as a cofactor.

The enzyme catalyses L-ornithine + NADPH + O2 = N(5)-hydroxy-L-ornithine + NADP(+) + H2O. It catalyses the reaction L-ornithine + NADH + O2 = N(5)-hydroxy-L-ornithine + NAD(+) + H2O. Its pathway is siderophore biosynthesis. L-ornithine N(5)-monooxygenase; part of the gene cluster that mediates the biosynthesis of hydroxamate-containing siderophores that play a critical role in virulence via intracellular iron acquisition during macrophage infection. SID1 catalyzes the conversion of L-ornithine to N(5)-hydroxyornithine, the first step in the biosynthesis of all hydroxamate-containing siderophores. The polypeptide is L-ornithine N(5)-monooxygenase (Ajellomyces capsulatus (Darling's disease fungus)).